The primary structure comprises 1026 residues: DNA polymerase catalytic subunit (1026 aa).

The stretch at leucine 664–leucine 695 forms a coiled coil.

The protein belongs to the DNA polymerase type-B family.

It localises to the host nucleus. The catalysed reaction is DNA(n) + a 2'-deoxyribonucleoside 5'-triphosphate = DNA(n+1) + diphosphate. Functionally, replicates viral genomic DNA. In Alcelaphine herpesvirus 1 (strain C500) (AlHV-1), this protein is DNA polymerase catalytic subunit (9).